The following is a 253-amino-acid chain: Phosphoribosylaminoimidazole-succinocarboxamide synthase (253 aa).

The protein belongs to the SAICAR synthetase family.

The catalysed reaction is 5-amino-1-(5-phospho-D-ribosyl)imidazole-4-carboxylate + L-aspartate + ATP = (2S)-2-[5-amino-1-(5-phospho-beta-D-ribosyl)imidazole-4-carboxamido]succinate + ADP + phosphate + 2 H(+). The protein operates within purine metabolism; IMP biosynthesis via de novo pathway; 5-amino-1-(5-phospho-D-ribosyl)imidazole-4-carboxamide from 5-amino-1-(5-phospho-D-ribosyl)imidazole-4-carboxylate: step 1/2. This is Phosphoribosylaminoimidazole-succinocarboxamide synthase from Jannaschia sp. (strain CCS1).